We begin with the raw amino-acid sequence, 374 residues long: Ribosomal RNA large subunit methyltransferase G (374 aa).

It belongs to the methyltransferase superfamily. RlmG family.

The protein localises to the cytoplasm. It catalyses the reaction guanosine(1835) in 23S rRNA + S-adenosyl-L-methionine = N(2)-methylguanosine(1835) in 23S rRNA + S-adenosyl-L-homocysteine + H(+). Functionally, specifically methylates the guanine in position 1835 (m2G1835) of 23S rRNA. This is Ribosomal RNA large subunit methyltransferase G from Pseudomonas fluorescens (strain Pf0-1).